Consider the following 275-residue polypeptide: Polyamine aminopropyltransferase 1 (275 aa).

One can recognise a PABS domain in the interval 2–235; the sequence is ELWFTEKQTK…GLWTFTIGSK (234 aa). Q31 provides a ligand contact to S-methyl-5'-thioadenosine. 2 residues coordinate spermidine: H62 and D86. S-methyl-5'-thioadenosine-binding positions include E106 and 137–138; that span reads DG. The Proton acceptor role is filled by D155. Residue 155-158 participates in spermidine binding; the sequence is DSTE. Residue P162 participates in S-methyl-5'-thioadenosine binding.

It belongs to the spermidine/spermine synthase family. Homodimer or homotetramer.

The protein resides in the cytoplasm. The enzyme catalyses S-adenosyl 3-(methylsulfanyl)propylamine + putrescine = S-methyl-5'-thioadenosine + spermidine + H(+). It participates in amine and polyamine biosynthesis; spermidine biosynthesis; spermidine from putrescine: step 1/1. Its function is as follows. Catalyzes the irreversible transfer of a propylamine group from the amino donor S-adenosylmethioninamine (decarboxy-AdoMet) to putrescine (1,4-diaminobutane) to yield spermidine. The protein is Polyamine aminopropyltransferase 1 of Bacillus cereus (strain ATCC 14579 / DSM 31 / CCUG 7414 / JCM 2152 / NBRC 15305 / NCIMB 9373 / NCTC 2599 / NRRL B-3711).